We begin with the raw amino-acid sequence, 353 residues long: Photosystem II protein D1 (353 aa).

N-acetylthreonine is present on Thr-2. Thr-2 carries the post-translational modification Phosphothreonine. The next 3 helical transmembrane spans lie at 29-46 (YIGW…TATS), 118-133 (HFLL…EWEL), and 142-156 (WIAV…AATA). His-118 lines the chlorophyll a pocket. Tyr-126 lines the pheophytin a pocket. 2 residues coordinate [CaMn4O5] cluster: Asp-170 and Glu-189. Residues 197-218 (FHMLGVAGVFGGSLFSAMHGSL) form a helical membrane-spanning segment. His-198 contacts chlorophyll a. A quinone is bound by residues His-215 and 264–265 (SF). His-215 is a binding site for Fe cation. His-272 contacts Fe cation. Residues 274–288 (FLTAWPVVGIWFTAL) traverse the membrane as a helical segment. Residues His-332, Glu-333, Asp-342, and Ala-344 each contribute to the [CaMn4O5] cluster site. Residues 345 to 353 (AVEAPSTNG) constitute a propeptide that is removed on maturation.

Belongs to the reaction center PufL/M/PsbA/D family. PSII is composed of 1 copy each of membrane proteins PsbA, PsbB, PsbC, PsbD, PsbE, PsbF, PsbH, PsbI, PsbJ, PsbK, PsbL, PsbM, PsbT, PsbX, PsbY, PsbZ, Psb30/Ycf12, at least 3 peripheral proteins of the oxygen-evolving complex and a large number of cofactors. It forms dimeric complexes. The cofactor is The D1/D2 heterodimer binds P680, chlorophylls that are the primary electron donor of PSII, and subsequent electron acceptors. It shares a non-heme iron and each subunit binds pheophytin, quinone, additional chlorophylls, carotenoids and lipids. D1 provides most of the ligands for the Mn4-Ca-O5 cluster of the oxygen-evolving complex (OEC). There is also a Cl(-1) ion associated with D1 and D2, which is required for oxygen evolution. The PSII complex binds additional chlorophylls, carotenoids and specific lipids.. In terms of processing, tyr-161 forms a radical intermediate that is referred to as redox-active TyrZ, YZ or Y-Z. Post-translationally, C-terminally processed by CTPA; processing is essential to allow assembly of the oxygen-evolving complex and thus photosynthetic growth.

It is found in the plastid. It localises to the chloroplast thylakoid membrane. It catalyses the reaction 2 a plastoquinone + 4 hnu + 2 H2O = 2 a plastoquinol + O2. Photosystem II (PSII) is a light-driven water:plastoquinone oxidoreductase that uses light energy to abstract electrons from H(2)O, generating O(2) and a proton gradient subsequently used for ATP formation. It consists of a core antenna complex that captures photons, and an electron transfer chain that converts photonic excitation into a charge separation. The D1/D2 (PsbA/PsbD) reaction center heterodimer binds P680, the primary electron donor of PSII as well as several subsequent electron acceptors. The polypeptide is Photosystem II protein D1 (Barbarea verna (Land cress)).